The primary structure comprises 92 residues: Small ribosomal subunit protein uS19 (92 aa).

This sequence belongs to the universal ribosomal protein uS19 family.

Protein S19 forms a complex with S13 that binds strongly to the 16S ribosomal RNA. The polypeptide is Small ribosomal subunit protein uS19 (Brucella anthropi (strain ATCC 49188 / DSM 6882 / CCUG 24695 / JCM 21032 / LMG 3331 / NBRC 15819 / NCTC 12168 / Alc 37) (Ochrobactrum anthropi)).